A 215-amino-acid chain; its full sequence is Pyridoxine/pyridoxamine 5'-phosphate oxidase (215 aa).

Residues 9-12 (RRDY) and Lys-67 contribute to the substrate site. Residues 62–67 (RVVLLK), 77–78 (FT), Lys-84, and Gln-106 each bind FMN. 3 residues coordinate substrate: Tyr-124, Arg-128, and Ser-132. Residues 141-142 (QS) and Trp-186 contribute to the FMN site. A substrate-binding site is contributed by 192 to 194 (RLH). Arg-196 contacts FMN.

This sequence belongs to the pyridoxamine 5'-phosphate oxidase family. As to quaternary structure, homodimer. The cofactor is FMN.

It catalyses the reaction pyridoxamine 5'-phosphate + O2 + H2O = pyridoxal 5'-phosphate + H2O2 + NH4(+). The catalysed reaction is pyridoxine 5'-phosphate + O2 = pyridoxal 5'-phosphate + H2O2. It participates in cofactor metabolism; pyridoxal 5'-phosphate salvage; pyridoxal 5'-phosphate from pyridoxamine 5'-phosphate: step 1/1. The protein operates within cofactor metabolism; pyridoxal 5'-phosphate salvage; pyridoxal 5'-phosphate from pyridoxine 5'-phosphate: step 1/1. Functionally, catalyzes the oxidation of either pyridoxine 5'-phosphate (PNP) or pyridoxamine 5'-phosphate (PMP) into pyridoxal 5'-phosphate (PLP). In Chromohalobacter salexigens (strain ATCC BAA-138 / DSM 3043 / CIP 106854 / NCIMB 13768 / 1H11), this protein is Pyridoxine/pyridoxamine 5'-phosphate oxidase.